Consider the following 257-residue polypeptide: Type III pantothenate kinase (257 aa).

24-31 lines the ATP pocket; the sequence is MIGNSRLH. Residues Y96 and 100–103 contribute to the substrate site; that span reads GIDR. D102 serves as the catalytic Proton acceptor. D122 provides a ligand contact to K(+). T125 is an ATP binding site. Residue T180 coordinates substrate.

It belongs to the type III pantothenate kinase family. As to quaternary structure, homodimer. NH4(+) serves as cofactor. Requires K(+) as cofactor.

The protein localises to the cytoplasm. The catalysed reaction is (R)-pantothenate + ATP = (R)-4'-phosphopantothenate + ADP + H(+). Its pathway is cofactor biosynthesis; coenzyme A biosynthesis; CoA from (R)-pantothenate: step 1/5. Its function is as follows. Catalyzes the phosphorylation of pantothenate (Pan), the first step in CoA biosynthesis. The polypeptide is Type III pantothenate kinase (Synechocystis sp. (strain ATCC 27184 / PCC 6803 / Kazusa)).